Here is a 156-residue protein sequence, read N- to C-terminus: Cyanate hydratase (156 aa).

Catalysis depends on residues arginine 96, glutamate 99, and serine 122.

This sequence belongs to the cyanase family.

It carries out the reaction cyanate + hydrogencarbonate + 3 H(+) = NH4(+) + 2 CO2. Its function is as follows. Catalyzes the reaction of cyanate with bicarbonate to produce ammonia and carbon dioxide. The chain is Cyanate hydratase from Pseudomonas paraeruginosa (strain DSM 24068 / PA7) (Pseudomonas aeruginosa (strain PA7)).